We begin with the raw amino-acid sequence, 184 residues long: GMP synthase [glutamine-hydrolyzing] subunit A (184 aa).

The 182-residue stretch at 3–184 (HIAVIDNHGQ…VFKNFIARCQ (182 aa)) folds into the Glutamine amidotransferase type-1 domain. The active-site Nucleophile is Cys-75. Catalysis depends on residues His-163 and Glu-165.

As to quaternary structure, heterodimer composed of a glutamine amidotransferase subunit (A) and a GMP-binding subunit (B).

It catalyses the reaction XMP + L-glutamine + ATP + H2O = GMP + L-glutamate + AMP + diphosphate + 2 H(+). It functions in the pathway purine metabolism; GMP biosynthesis; GMP from XMP (L-Gln route): step 1/1. Catalyzes the synthesis of GMP from XMP. The protein is GMP synthase [glutamine-hydrolyzing] subunit A of Haloquadratum walsbyi (strain DSM 16790 / HBSQ001).